The following is a 515-amino-acid chain: Leucine-rich repeat transmembrane neuronal protein 2 (515 aa).

The N-terminal stretch at 1 to 33 (MGLHFKWPLGAPMLAAIYAMSVVLKMLPALGMA) is a signal peptide. Over 34-421 (CPPKCRCEKL…EPDNAIFTQR (388 aa)) the chain is Extracellular. N-linked (GlcNAc...) asparagine glycosylation is present at Asn57. LRR repeat units lie at residues 61-83 (KGSL…QFAS), 84-107 (FSQL…AFQG), 109-131 (YKLK…TFTQ), 132-155 (LINL…LFYG), 156-179 (LRKL…LFWD), 181-203 (RSLE…GFAG), 205-227 (IKLR…HFLR), 229-251 (SSLH…MEWT), 252-275 (WSTL…VFET), and 276-299 (MPNL…ILSS). N-linked (GlcNAc...) asparagine glycosylation occurs at Asn126. Asn243 is a glycosylation site (N-linked (GlcNAc...) asparagine). Asn362 is a glycosylation site (N-linked (GlcNAc...) asparagine). Residues 422–442 (VITGTMALLFSFFFIIFIVFI) form a helical membrane-spanning segment. Over 443–515 (SRKCCPPTLR…QQLPYKECEV (73 aa)) the chain is Cytoplasmic. The Involved in DLG4-binding motif lies at 512–515 (ECEV).

This sequence belongs to the LRRTM family. Interacts with DLG4. Interacts with neurexin NRXN1; interaction is mediated by heparan sulfate glycan modification on neurexin. In terms of tissue distribution, expressed in neuronal tissues. Widely distributed in neuropil regions in discrete puncta throughout the brain (at protein level). Detected in cortex, thalamus, striatum, olfactory bulb, cerebellum and all hippocampal subfields (at protein level). More abundant in deep than in superficial layers of neocortex (at protein level).

The protein localises to the cell membrane. It localises to the postsynaptic cell membrane. Involved in the development and maintenance of excitatory synapses in the nervous system. Regulates surface expression of AMPA receptors and instructs the development of functional glutamate release sites. Acts as a ligand for the presynaptic receptors NRXN1-A and NRXN1-B. The protein is Leucine-rich repeat transmembrane neuronal protein 2 (Lrrtm2) of Rattus norvegicus (Rat).